The following is an 80-amino-acid chain: Inner kinetochore subunit MHF2 (80 aa).

It belongs to the CENP-X/MHF2 family. In terms of assembly, the MHF histone-fold complex is a heterotetramer of 2 MHF1-MHF2 heterodimers. Together with MPH1/FANCM, forms the FANCM-MHF complex. Component of the inner kinetochore constitutive centromere-associated network (CCAN) (also known as central kinetochore CTF19 complex in yeast), which is composed of at least AME1, CHL4, CNN1, CTF3, CTF19, IML3, MCM16, MCM21, MCM22, MHF1, MHF2, MIF2, NKP1, NKP2, OKP1 and WIP1.

DNA-binding component of a FANCM-MHF complex involved in DNA damage repair and genome maintenance. FANCM-MHF promotes gene conversion at blocked replication forks, probably by reversal of the stalled fork. Component of the kinetochore, a multiprotein complex that assembles on centromeric DNA and attaches chromosomes to spindle microtubules, mediating chromosome segregation and sister chromatid segregation during meiosis and mitosis. Component of the inner kinetochore constitutive centromere-associated network (CCAN), which serves as a structural platform for outer kinetochore assembly. The sequence is that of Inner kinetochore subunit MHF2 from Saccharomyces cerevisiae (strain ATCC 204508 / S288c) (Baker's yeast).